A 425-amino-acid polypeptide reads, in one-letter code: 3-phosphoshikimate 1-carboxyvinyltransferase (425 aa).

3 residues coordinate 3-phosphoshikimate: Lys-22, Ser-23, and Arg-27. Lys-22 provides a ligand contact to phosphoenolpyruvate. The phosphoenolpyruvate site is built by Gly-95 and Arg-123. 3-phosphoshikimate is bound by residues Ser-169, Ser-170, Gln-171, Ser-197, Asp-313, Asn-336, and Lys-340. Gln-171 serves as a coordination point for phosphoenolpyruvate. Asp-313 functions as the Proton acceptor in the catalytic mechanism. 3 residues coordinate phosphoenolpyruvate: Arg-344, Arg-386, and Lys-411.

This sequence belongs to the EPSP synthase family. As to quaternary structure, monomer.

The protein localises to the cytoplasm. The catalysed reaction is 3-phosphoshikimate + phosphoenolpyruvate = 5-O-(1-carboxyvinyl)-3-phosphoshikimate + phosphate. Its pathway is metabolic intermediate biosynthesis; chorismate biosynthesis; chorismate from D-erythrose 4-phosphate and phosphoenolpyruvate: step 6/7. Functionally, catalyzes the transfer of the enolpyruvyl moiety of phosphoenolpyruvate (PEP) to the 5-hydroxyl of shikimate-3-phosphate (S3P) to produce enolpyruvyl shikimate-3-phosphate and inorganic phosphate. This chain is 3-phosphoshikimate 1-carboxyvinyltransferase, found in Marinomonas sp. (strain MWYL1).